A 259-amino-acid chain; its full sequence is 5'-nucleotidase SurE (259 aa).

A divalent metal cation-binding residues include D13, D14, S44, and N100.

This sequence belongs to the SurE nucleotidase family. The cofactor is a divalent metal cation.

It is found in the cytoplasm. It carries out the reaction a ribonucleoside 5'-phosphate + H2O = a ribonucleoside + phosphate. Nucleotidase that shows phosphatase activity on nucleoside 5'-monophosphates. This chain is 5'-nucleotidase SurE, found in Bacteroides thetaiotaomicron (strain ATCC 29148 / DSM 2079 / JCM 5827 / CCUG 10774 / NCTC 10582 / VPI-5482 / E50).